Reading from the N-terminus, the 453-residue chain is Nuclear and cytoplasmic polyadenylated RNA-binding protein PUB1 (453 aa).

The segment at 1 to 67 (MSENNEEQHQ…PSVVPANAIT (67 aa)) is disordered. The residue at position 2 (Ser-2) is an N-acetylserine. 2 RRM domains span residues 75 to 152 (RVLY…WAFQ) and 162 to 240 (FNLF…WAAK). The tract at residues 241–262 (RDNNNNNNYQQRRNYGNNNRGG) is disordered. A compositionally biased stretch (low complexity) spans 244 to 262 (NNNNNYQQRRNYGNNNRGG). Arg-260 carries the post-translational modification Omega-N-methylarginine. An RNA-binding RGG-box region spans residues 260–264 (RGGFR). In terms of domain architecture, RRM 3 spans 341-413 (TTAYIGNIPH…RNLRTGWGKE (73 aa)). Residues 419-453 (PQQQQQGGQPLIMNDQQQPVMSEQQQQQQQQQQQQ) form a disordered region. Residues 434–453 (QQQPVMSEQQQQQQQQQQQQ) show a composition bias toward low complexity.

Interacts with NAB2.

It is found in the cytoplasm. The protein localises to the nucleus. It localises to the P-body. The protein resides in the stress granule. In terms of biological role, may be associated with hnRNA within the nucleus and remains associated during nucleocytoplasmic mRNA transport, once the proteins are in the cytoplasm, disassembly of PUB1-RNA complexes may occur prior to PAB1 binding and formation of a translationally competent RNP complex. Binds to polyadenylated RNA; prefers to bind poly(rU); binds to T-rich single-stranded DNA. The sequence is that of Nuclear and cytoplasmic polyadenylated RNA-binding protein PUB1 from Saccharomyces cerevisiae (strain ATCC 204508 / S288c) (Baker's yeast).